Reading from the N-terminus, the 145-residue chain is MVLMVVVFLLLLFWENELTEDVVLTSIEQLHVDYPQNAVPLRYCNYMILQRVIREPDHRCRKVHVFIHERPQKINRVCTSSKKMSCPNDSDLFCFQSETKFRMTVCQLIDGTTYPACRYQISPIKGFVLVTCDDLGPVDLQGYVE.

The first 19 residues, 1–19 (MVLMVVVFLLLLFWENELT), serve as a signal peptide directing secretion.

The protein belongs to the pancreatic ribonuclease family.

Its subcellular location is the secreted. Functionally, does not exhibit any ribonuclease activity. The chain is Probable inactive ribonuclease-like protein 12 (Rnase12) from Mus musculus (Mouse).